Reading from the N-terminus, the 238-residue chain is Demethylmenaquinone methyltransferase (238 aa).

Residues threonine 65, aspartate 85, and 109–110 each bind S-adenosyl-L-methionine; that span reads DA.

Belongs to the class I-like SAM-binding methyltransferase superfamily. MenG/UbiE family.

It catalyses the reaction a 2-demethylmenaquinol + S-adenosyl-L-methionine = a menaquinol + S-adenosyl-L-homocysteine + H(+). It participates in quinol/quinone metabolism; menaquinone biosynthesis; menaquinol from 1,4-dihydroxy-2-naphthoate: step 2/2. In terms of biological role, methyltransferase required for the conversion of demethylmenaquinol (DMKH2) to menaquinol (MKH2). The polypeptide is Demethylmenaquinone methyltransferase (Roseiflexus sp. (strain RS-1)).